We begin with the raw amino-acid sequence, 185 residues long: Ribosome maturation factor RimM (185 aa).

Residues 106–185 form the PRC barrel domain; that stretch reads SGEYYWKDLL…IIEVDWDPGF (80 aa).

The protein belongs to the RimM family. Binds ribosomal protein uS19.

The protein resides in the cytoplasm. Functionally, an accessory protein needed during the final step in the assembly of 30S ribosomal subunit, possibly for assembly of the head region. Essential for efficient processing of 16S rRNA. May be needed both before and after RbfA during the maturation of 16S rRNA. It has affinity for free ribosomal 30S subunits but not for 70S ribosomes. In Sodalis glossinidius (strain morsitans), this protein is Ribosome maturation factor RimM.